We begin with the raw amino-acid sequence, 623 residues long: DNA-directed RNA polymerase subunit gamma (623 aa).

Zn(2+) is bound by residues Cys-70, Cys-72, Cys-85, and Cys-88. The Mg(2+) site is built by Asp-466, Asp-468, and Asp-470.

Belongs to the RNA polymerase beta' chain family. RpoC1 subfamily. As to quaternary structure, in cyanobacteria the RNAP catalytic core is composed of 2 alpha, 1 beta, 1 beta', 1 gamma and 1 omega subunit. When a sigma factor is associated with the core the holoenzyme is formed, which can initiate transcription. It depends on Mg(2+) as a cofactor. Zn(2+) is required as a cofactor.

The enzyme catalyses RNA(n) + a ribonucleoside 5'-triphosphate = RNA(n+1) + diphosphate. DNA-dependent RNA polymerase catalyzes the transcription of DNA into RNA using the four ribonucleoside triphosphates as substrates. This Acaryochloris marina (strain MBIC 11017) protein is DNA-directed RNA polymerase subunit gamma.